A 391-amino-acid chain; its full sequence is MPLQLLSQRLEKTQHDGLYRSLRSVERTTPQVFVEGRQALLFCSNNYLGLAEHPSLAQAAADAALQYGTSSAASRLVSGNQPLHAMLEAKLSAWKGTETALLFNSGYAANTGIIAALAGRGDIIFSDRLNHASIIDGALLSGARLIRYPHNDTLALARLLEQHQTDGLRLIVTDGVFSMDGDIAPLQGIADLAEQHRALLMVDDAHAGGVLGQQGRGTVDFCGVTGRVAIQMGTFGKALGSFGAYAACSRLVRDYLINRSRSLIFSTSLPPAVLAASAAAVELVQAEEGQQLRQQLTDNSHLLRYLLQQAGYKVPDGCTPIVPVMVGEAETTTRFSTRLLEEGVFVQGIRPPTVPKGTSRLRCTVMASHSPDQIQQAVAAITRVGRELGVL.

Substrate is bound at residue R20. 106–107 serves as a coordination point for pyridoxal 5'-phosphate; that stretch reads GY. H131 lines the substrate pocket. Residues S178, H206, and T234 each contribute to the pyridoxal 5'-phosphate site. Residue K237 is modified to N6-(pyridoxal phosphate)lysine. Residue T353 participates in substrate binding.

This sequence belongs to the class-II pyridoxal-phosphate-dependent aminotransferase family. BioF subfamily. In terms of assembly, homodimer. Requires pyridoxal 5'-phosphate as cofactor.

The enzyme catalyses 6-carboxyhexanoyl-[ACP] + L-alanine + H(+) = (8S)-8-amino-7-oxononanoate + holo-[ACP] + CO2. It participates in cofactor biosynthesis; biotin biosynthesis. Catalyzes the decarboxylative condensation of pimeloyl-[acyl-carrier protein] and L-alanine to produce 8-amino-7-oxononanoate (AON), [acyl-carrier protein], and carbon dioxide. The polypeptide is 8-amino-7-oxononanoate synthase (Trichlorobacter lovleyi (strain ATCC BAA-1151 / DSM 17278 / SZ) (Geobacter lovleyi)).